The chain runs to 394 residues: MVVFSKITVVLAGLATVASAVPTGTSRKSTFTVNQKARPVAQAKAINLPGMYASALSKYGAAVPASVKAAAESGTAVTTPEANDVEYLTPVNVGGTTLNLDFDTGSADLWVFSSELSSSESTGHSLYKPSSNATKLAGYSWSITYGDQSSASGDVYKDFVVVGGVKASPQAVEAASQISQQFVNDKNNDGLLGLAFSSINTVKPKSQTTFFDTVKGQLDSPLFAVTLKHNAPGTYDFGFVDKNKYTGSLTYAQVDSSQGFWSFTADGYKIGSKSGGSIQGIADTGTTLLLLPDNVVSDYYGQVSGAQQDSSAGGYTVPCSAQLPDFTVTIGSYNAVVPGSLINYAPLQSGSSTCFGGIQSNSGLGFSIFGDIFLKSQYVVFDANGPRLGFAPQA.

Residues 1–20 (MVVFSKITVVLAGLATVASA) form the signal peptide. Residues 21–71 (VPTGTSRKSTFTVNQKARPVAQAKAINLPGMYASALSKYGAAVPASVKAAA) constitute a propeptide, activation peptide. A Peptidase A1 domain is found at 87–391 (YLTPVNVGGT…DANGPRLGFA (305 aa)). Aspartate 103 is a catalytic residue. Residue asparagine 132 is glycosylated (N-linked (GlcNAc...) asparagine). Aspartate 283 is a catalytic residue. Cysteine 319 and cysteine 354 are joined by a disulfide.

Belongs to the peptidase A1 family. As to quaternary structure, monomer.

It localises to the secreted. The catalysed reaction is Hydrolysis of proteins with broad specificity similar to that of pepsin A, preferring hydrophobic residues at P1 and P1', but also cleaving 20-Gly-|-Glu-21 in the B chain of insulin. Clots milk, and activates trypsinogen.. Secreted aspartic endopeptidase that allows assimilation of proteinaceous substrates. The scissile peptide bond is attacked by a nucleophilic water molecule activated by two aspartic residues in the active site. Shows a broad primary substrate specificity. Favors hydrophobic residues at the P1 and P1' positions, but can also activate trypsinogen and hydrolyze the B chain of insulin between positions 'Gly-20' and 'Glu-21'. This Penicillium janthinellum (Penicillium vitale) protein is Penicillopepsin-2.